We begin with the raw amino-acid sequence, 224 residues long: Small ribosomal subunit protein uS7 (224 aa).

This sequence belongs to the universal ribosomal protein uS7 family. Part of the 30S ribosomal subunit.

One of the primary rRNA binding proteins, it binds directly to 16S rRNA where it nucleates assembly of the head domain of the 30S subunit. Is located at the subunit interface close to the decoding center. The protein is Small ribosomal subunit protein uS7 of Caldivirga maquilingensis (strain ATCC 700844 / DSM 13496 / JCM 10307 / IC-167).